The sequence spans 456 residues: Imidazolonepropionase (456 aa).

Positions 104 and 106 each coordinate Fe(3+). Residues His-104 and His-106 each coordinate Zn(2+). Arg-113, Tyr-176, and His-209 together coordinate 4-imidazolone-5-propanoate. Tyr-176 serves as a coordination point for N-formimidoyl-L-glutamate. His-274 contacts Fe(3+). Residue His-274 participates in Zn(2+) binding. 4-imidazolone-5-propanoate is bound at residue Gln-277. Asp-349 serves as a coordination point for Fe(3+). Position 349 (Asp-349) interacts with Zn(2+). N-formimidoyl-L-glutamate contacts are provided by Asn-351 and Gly-353. Ser-354 lines the 4-imidazolone-5-propanoate pocket.

The protein belongs to the metallo-dependent hydrolases superfamily. HutI family. The cofactor is Zn(2+). Fe(3+) serves as cofactor.

It is found in the cytoplasm. The catalysed reaction is 4-imidazolone-5-propanoate + H2O = N-formimidoyl-L-glutamate. Its pathway is amino-acid degradation; L-histidine degradation into L-glutamate; N-formimidoyl-L-glutamate from L-histidine: step 3/3. Catalyzes the hydrolytic cleavage of the carbon-nitrogen bond in imidazolone-5-propanoate to yield N-formimidoyl-L-glutamate. It is the third step in the universal histidine degradation pathway. The polypeptide is Imidazolonepropionase (Verminephrobacter eiseniae (strain EF01-2)).